The chain runs to 421 residues: MDLENKVKKMGLGHEQGFGAPCLKCKEKCEGFELHFWRKICRNCKCGQEEHDVLLSNEEDRKVGKLFEDTKYTTLIAKLKSDGIPMYKRNVMILTNPVAAKKNVSINTVTYEWAPPVQNQALARQYMQMLPKEKQPVAGSEGAQYRKKQLAKQLPAHDQDPSKCHELSPREVKEMEQFVKKYKSEALGVGDVKLPCEMDAQGPKQMNIPGGDRSTPAAVGAMEDKSAEHKRTQYSCYCCKLSMKEGDPAIYAERAGYDKLWHPACFVCSTCHELLVDMIYFWKNEKLYCGRHYCDSEKPRCAGCDELIFSNEYTQAENQNWHLKHFCCFDCDSILAGEIYVMVNDKPVCKPCYVKNHAVVCQGCHNAIDPEVQRVTYNNFSWHASTECFLCSCCSKCLIGQKFMPVEGMVFCSVECKKRMS.

In terms of domain architecture, PET spans 92–199 (MILTNPVAAK…GDVKLPCEMD (108 aa)). The disordered stretch occupies residues 133–164 (EKQPVAGSEGAQYRKKQLAKQLPAHDQDPSKC). Positions 155–164 (PAHDQDPSKC) are enriched in basic and acidic residues. LIM zinc-binding domains lie at 234 to 297 (YSCY…CDSE), 299 to 359 (PRCA…NHAV), and 362 to 421 (QGCH…KRMS).

Belongs to the prickle / espinas / testin family. In terms of assembly, interacts via LIM domain 1 with ZYX. Interacts (via LIM domain 3) with ENAH and VASP. Interacts with ALKBH4, talin, actin, alpha-actinin, GRIP1 and PXN. Interacts (via LIM domain 2) with ACTL7A (via N-terminus). Heterodimer with ACTL7A; the heterodimer interacts with ENAH to form a heterotrimer.

Its subcellular location is the cytoplasm. The protein resides in the cell junction. It localises to the focal adhesion. Functionally, scaffold protein that may play a role in cell adhesion, cell spreading and in the reorganization of the actin cytoskeleton. Plays a role in the regulation of cell proliferation. May act as a tumor suppressor. This chain is Testin (TES), found in Pan troglodytes (Chimpanzee).